The sequence spans 194 residues: Potassium-transporting ATPase KdpC subunit (194 aa).

Residues 12–34 form a helical membrane-spanning segment; the sequence is LFLLLLTGGVYPLLTTALGQWWF.

Belongs to the KdpC family. As to quaternary structure, the system is composed of three essential subunits: KdpA, KdpB and KdpC.

Its subcellular location is the cell inner membrane. In terms of biological role, part of the high-affinity ATP-driven potassium transport (or Kdp) system, which catalyzes the hydrolysis of ATP coupled with the electrogenic transport of potassium into the cytoplasm. This subunit acts as a catalytic chaperone that increases the ATP-binding affinity of the ATP-hydrolyzing subunit KdpB by the formation of a transient KdpB/KdpC/ATP ternary complex. The protein is Potassium-transporting ATPase KdpC subunit of Salmonella heidelberg (strain SL476).